We begin with the raw amino-acid sequence, 614 residues long: Laccase 1 (614 aa).

The N-terminal stretch at 1–21 (MSRFARLLLMVVALFFTNAWA) is a signal peptide. Plastocyanin-like domains follow at residues 30 to 143 (ITWK…IRPK) and 172 to 360 (YLVV…MRIP). Asn-75 carries an N-linked (GlcNAc...) asparagine glycan. The Cu cation site is built by His-79, His-81, His-123, and His-125. N-linked (GlcNAc...) asparagine glycosylation is found at Asn-257, Asn-280, Asn-445, Asn-469, and Asn-485. Positions 469-599 (NATRDTENDG…GGMGIAILDG (131 aa)) constitute a Plastocyanin-like 3 domain. His-507, His-510, and His-512 together coordinate Cu cation. Residue Asn-527 is glycosylated (N-linked (GlcNAc...) asparagine). Residues His-581, Cys-582, His-583, and His-587 each coordinate Cu cation.

This sequence belongs to the multicopper oxidase family. Requires Cu cation as cofactor.

The protein localises to the cell surface. It functions in the pathway pigment biosynthesis. In terms of biological role, laccase; part of the Pks1 gene cluster that mediates the biosynthesis of an anthraquinone derivative pigment that contributes to conidial pigmentation that provides protection from UV radiation, heat and cold stress. The polyketide synthase Pks1 produces 1-acetyl-2,4,6,8-tetrahydroxy-9,10-anthraquinone though condensation of acetyl-CoA with malonyl-CoA. The dehydratase EthD and the laccase Mlac1 further convert the anthraquinone derivative into the final conidial pigment. This is Laccase 1 from Metarhizium majus (strain ARSEF 297).